Here is a 250-residue protein sequence, read N- to C-terminus: Uracil-DNA glycosylase (250 aa).

Asp-78 acts as the Proton acceptor in catalysis. The tract at residues 228 to 250 is disordered; that stretch reads RGQKPVDWSGEQNNASRQGKFAL.

Belongs to the uracil-DNA glycosylase (UDG) superfamily. UNG family.

The protein localises to the cytoplasm. It catalyses the reaction Hydrolyzes single-stranded DNA or mismatched double-stranded DNA and polynucleotides, releasing free uracil.. In terms of biological role, excises uracil residues from the DNA which can arise as a result of misincorporation of dUMP residues by DNA polymerase or due to deamination of cytosine. This chain is Uracil-DNA glycosylase, found in Bordetella bronchiseptica (strain ATCC BAA-588 / NCTC 13252 / RB50) (Alcaligenes bronchisepticus).